The chain runs to 179 residues: Inner membrane-spanning protein YciB (179 aa).

A run of 5 helical transmembrane segments spans residues 22–42, 50–70, 76–96, 121–141, and 149–169; these read IYAA…YSWV, MALI…FFHN, WKVT…QWVM, LAWA…AFWL, and FKVF…GVYI.

The protein belongs to the YciB family.

Its subcellular location is the cell inner membrane. Functionally, plays a role in cell envelope biogenesis, maintenance of cell envelope integrity and membrane homeostasis. In Salmonella dublin (strain CT_02021853), this protein is Inner membrane-spanning protein YciB.